A 361-amino-acid polypeptide reads, in one-letter code: Phospho-N-acetylmuramoyl-pentapeptide-transferase (361 aa).

Transmembrane regions (helical) follow at residues 25-45, 73-93, 97-117, 134-154, 168-188, 200-220, 237-257, 264-284, 289-309, and 338-358; these read RAVL…PAVI, TMGG…WADL, YVWL…VDDW, YFWQ…TASL, ATFG…IVGA, GLAI…AYVA, AGEL…FLWF, VFMG…VAVV, IILF…MIQV, and QVVV…LSSL.

The protein belongs to the glycosyltransferase 4 family. MraY subfamily. Mg(2+) is required as a cofactor.

The protein localises to the cell inner membrane. The catalysed reaction is UDP-N-acetyl-alpha-D-muramoyl-L-alanyl-gamma-D-glutamyl-meso-2,6-diaminopimeloyl-D-alanyl-D-alanine + di-trans,octa-cis-undecaprenyl phosphate = di-trans,octa-cis-undecaprenyl diphospho-N-acetyl-alpha-D-muramoyl-L-alanyl-D-glutamyl-meso-2,6-diaminopimeloyl-D-alanyl-D-alanine + UMP. It functions in the pathway cell wall biogenesis; peptidoglycan biosynthesis. Its function is as follows. Catalyzes the initial step of the lipid cycle reactions in the biosynthesis of the cell wall peptidoglycan: transfers peptidoglycan precursor phospho-MurNAc-pentapeptide from UDP-MurNAc-pentapeptide onto the lipid carrier undecaprenyl phosphate, yielding undecaprenyl-pyrophosphoryl-MurNAc-pentapeptide, known as lipid I. The protein is Phospho-N-acetylmuramoyl-pentapeptide-transferase of Thiobacillus denitrificans (strain ATCC 25259 / T1).